We begin with the raw amino-acid sequence, 228 residues long: 3,4-dihydroxy-2-butanone 4-phosphate synthase (228 aa).

Residues 37–38, Asp-42, 150–154, and Glu-174 each bind D-ribulose 5-phosphate; these read RE and RRGHT. Glu-38 provides a ligand contact to Mg(2+). Mg(2+) is bound at residue His-153.

It belongs to the DHBP synthase family. As to quaternary structure, homodimer. Requires Mg(2+) as cofactor. Mn(2+) is required as a cofactor.

The enzyme catalyses D-ribulose 5-phosphate = (2S)-2-hydroxy-3-oxobutyl phosphate + formate + H(+). It functions in the pathway cofactor biosynthesis; riboflavin biosynthesis; 2-hydroxy-3-oxobutyl phosphate from D-ribulose 5-phosphate: step 1/1. In terms of biological role, catalyzes the conversion of D-ribulose 5-phosphate to formate and 3,4-dihydroxy-2-butanone 4-phosphate. The chain is 3,4-dihydroxy-2-butanone 4-phosphate synthase from Photobacterium profundum (strain SS9).